Consider the following 32-residue polypeptide: Cyclotide Hyfl-B (32 aa).

The cyclopeptide (Gly-Asn) cross-link spans Gly-1–Asn-32. 3 disulfide bridges follow: Cys-6-Cys-22, Cys-10-Cys-24, and Cys-15-Cys-29.

The protein belongs to the cyclotide family. Moebius subfamily. In terms of processing, this is a cyclic peptide.

Functionally, probably participates in a plant defense mechanism. The sequence is that of Cyclotide Hyfl-B from Hybanthus floribundus (Greenviolet).